Consider the following 254-residue polypeptide: Proteasome activator complex subunit 3 (254 aa).

N6-acetyllysine is present on residues lysine 6 and lysine 14. Lysine 195 is subject to N6-acetyllysine; by P300/CBP.

In terms of assembly, homoheptamer. Post-translationally, acetylation at the major site Lys-195 is important for oligomerization and ability to degrade its target substrates. Deacetylated by SIRT1.

Its function is as follows. Implicated in immunoproteasome assembly and required for efficient antigen processing. The PA28 activator complex enhances the generation of class I binding peptides by altering the cleavage pattern of the proteasome. This is Proteasome activator complex subunit 3 from Gallus gallus (Chicken).